We begin with the raw amino-acid sequence, 96 residues long: Co-chaperonin GroES (96 aa).

Belongs to the GroES chaperonin family. As to quaternary structure, heptamer of 7 subunits arranged in a ring. Interacts with the chaperonin GroEL.

The protein localises to the cytoplasm. Its function is as follows. Together with the chaperonin GroEL, plays an essential role in assisting protein folding. The GroEL-GroES system forms a nano-cage that allows encapsulation of the non-native substrate proteins and provides a physical environment optimized to promote and accelerate protein folding. GroES binds to the apical surface of the GroEL ring, thereby capping the opening of the GroEL channel. The chain is Co-chaperonin GroES from Nitrosomonas eutropha (strain DSM 101675 / C91 / Nm57).